The following is a 380-amino-acid chain: Cytochrome b (380 aa).

The next 4 helical transmembrane spans lie at F34–M54, W78–I99, W114–L134, and F179–L199. Heme b-binding residues include H84 and H98. Heme b is bound by residues H183 and H197. Residue H202 participates in a ubiquinone binding. The next 4 helical transmembrane spans lie at Y227–L247, L289–H309, F321–A341, and F348–P368.

It belongs to the cytochrome b family. As to quaternary structure, the cytochrome bc1 complex contains 3 respiratory subunits (MT-CYB, CYC1 and UQCRFS1), 2 core proteins (UQCRC1 and UQCRC2) and probably 6 low-molecular weight proteins. Heme b is required as a cofactor.

It is found in the mitochondrion inner membrane. Component of the ubiquinol-cytochrome c reductase complex (complex III or cytochrome b-c1 complex) that is part of the mitochondrial respiratory chain. The b-c1 complex mediates electron transfer from ubiquinol to cytochrome c. Contributes to the generation of a proton gradient across the mitochondrial membrane that is then used for ATP synthesis. The chain is Cytochrome b (MT-CYB) from Pelomedusa subrufa (African side-necked turtle).